The primary structure comprises 634 residues: MTNSNLRTENHFDYVKITLASPDRVMEWGQRTLPNGQVVGEVTKPETINYRTLKPEMDGLFCEKIFGPSKDWECHCGKYKRVRHRGIVCERCGVEVTESRVRRHRMGFIKLAAPVSHVWYLKGIPSYVAILLDMPLRDVEQIVYFNCYVVLDPGDHKDLKYKQLLTEDEWLEIEDEIYAEDSEIENEPVVGIGAEALKQLLEDLTLDEVAEQLREEIAGSKGQKRAKLIKRLRVIDNFIATNARPEWMVLDVIPVIPPDLRPMVQLDGGRFATSDLNDLYRRVINRNNRLARLQEILAPEIIVRNEKRMLQEAVDALIDNGRRGRTVVGANNRPLKSLSDIIEGKQGRFRQNLLGKRVDYSGRSVIVVGPKLKMHQCGLPKEMAIELFQPFVIHRLIRQNIVNNIKAAKKLIQRADDEVMQVLQEVIDGHPIMLNRAPTLHRLGIQAFEPKLVDGRAIQLHPLVCPAFNADFDGDQMAVHVPLAIEAQTEARMLMLASNNILSPATGEPIITPSQDMVLGAYYLTALQPDVQPVDFGDRSRTFSDLEDVIHAFEDKRLGLHDWVWVRFNGEVEDDDEREEPVSSETLSDGTRFEQWTYRRDRFDDDGALISRYILTTVGRVVMNHTIIDAVAAT.

Residues Cys74, Cys76, Cys89, and Cys92 each contribute to the Zn(2+) site. The Mg(2+) site is built by Asp471, Asp473, and Asp475.

It belongs to the RNA polymerase beta' chain family. RpoC1 subfamily. In cyanobacteria the RNAP catalytic core is composed of 2 alpha, 1 beta, 1 beta', 1 gamma and 1 omega subunit. When a sigma factor is associated with the core the holoenzyme is formed, which can initiate transcription. It depends on Mg(2+) as a cofactor. Zn(2+) is required as a cofactor.

It catalyses the reaction RNA(n) + a ribonucleoside 5'-triphosphate = RNA(n+1) + diphosphate. Its function is as follows. DNA-dependent RNA polymerase catalyzes the transcription of DNA into RNA using the four ribonucleoside triphosphates as substrates. The polypeptide is DNA-directed RNA polymerase subunit gamma (Synechococcus sp. (strain WH7803)).